Consider the following 224-residue polypeptide: Ribonuclease HII (224 aa).

The RNase H type-2 domain occupies Ser7–Gln217. Asp13, Glu14, and Asp111 together coordinate a divalent metal cation.

Belongs to the RNase HII family. Requires Mn(2+) as cofactor. It depends on Mg(2+) as a cofactor.

It is found in the cytoplasm. The catalysed reaction is Endonucleolytic cleavage to 5'-phosphomonoester.. Functionally, endonuclease that specifically degrades the RNA of RNA-DNA hybrids. This is Ribonuclease HII from Methanocella arvoryzae (strain DSM 22066 / NBRC 105507 / MRE50).